The sequence spans 206 residues: Triosephosphate isomerase (206 aa).

Histidine 76 (electrophile) is an active-site residue. Residue glutamate 146 is the Proton acceptor of the active site.

This sequence belongs to the triosephosphate isomerase family. Homodimer.

The enzyme catalyses D-glyceraldehyde 3-phosphate = dihydroxyacetone phosphate. It participates in carbohydrate biosynthesis; gluconeogenesis. The protein operates within carbohydrate degradation; glycolysis; D-glyceraldehyde 3-phosphate from glycerone phosphate: step 1/1. The chain is Triosephosphate isomerase (Tpi) from Aedes togoi (Mosquito).